The chain runs to 126 residues: Ribosome-binding factor A (126 aa).

It belongs to the RbfA family. As to quaternary structure, monomer. Binds 30S ribosomal subunits, but not 50S ribosomal subunits or 70S ribosomes.

The protein resides in the cytoplasm. Its function is as follows. One of several proteins that assist in the late maturation steps of the functional core of the 30S ribosomal subunit. Associates with free 30S ribosomal subunits (but not with 30S subunits that are part of 70S ribosomes or polysomes). Required for efficient processing of 16S rRNA. May interact with the 5'-terminal helix region of 16S rRNA. The polypeptide is Ribosome-binding factor A (Haemophilus ducreyi (strain 35000HP / ATCC 700724)).